Reading from the N-terminus, the 265-residue chain is Homeobox protein CDX-1 (265 aa).

The segment at 9–153 is disordered; the sequence is KDSPVYPGPA…GGGGSGKTRT (145 aa). Residues 30–42 are compositionally biased toward pro residues; that stretch reads YGPPAPPPAPPQY. A compositionally biased stretch (low complexity) spans 73–92; the sequence is AAAYGPGPAAPAASPASLAF. The span at 93–108 shows a compositional bias: pro residues; sequence GPPPDFSPVPAPPGPG. Residues 110–126 are compositionally biased toward low complexity; that stretch reads GLLAQPLGGPGTPSSPG. A DNA-binding region (homeobox) is located at residues 154 to 213; the sequence is KDKYRVVYTDHQRLELEKEFHYSRYITIRRKSELAANLGLTERQVKIWFQNRRAKERKVN. The interval 157–178 is interaction with DNA; the sequence is YRVVYTDHQRLELEKEFHYSRY. Positions 196 to 207 are interaction with 5-mCpG DNA; sequence RQVKIWFQNRRA. Residues 207–217 show a composition bias toward basic residues; that stretch reads AKERKVNKKKQ. A disordered region spans residues 207–265; it reads AKERKVNKKKQQQQQPPQPPMAHDITATPAGPSLGGLCPSNTSLLATSSPMPVKEEFLP. The span at 245-256 shows a compositional bias: polar residues; sequence PSNTSLLATSSP.

It belongs to the Caudal homeobox family. In terms of tissue distribution, intestinal epithelium.

It localises to the nucleus. In terms of biological role, plays a role in transcriptional regulation. Involved in activated KRAS-mediated transcriptional activation of PRKD1 in colorectal cancer (CRC) cells. Binds to the PRKD1 promoter in colorectal cancer (CRC) cells. Could play a role in the terminal differentiation of the intestine. Binds preferentially to methylated DNA. This is Homeobox protein CDX-1 (CDX1) from Homo sapiens (Human).